Consider the following 521-residue polypeptide: MLAKFAALAALVASANAQAVCSLTAETHPSLNWSKCTSSGCTNVAGSITVDANWRWTHITSGSTNCYSGNEWDTSLCSTNTDCATKCCVDGAEYSSTYGIQTSGNSLSLQFVTKGSYSTNIGSRTYLMNGADAYQGFELLGNEFTFDVDVSGTGCGLNGALYFVSMDLDGGKAKYTNNKAGAKYGTGYCDAQCPRDLKYINGIANVEGWTPSTNDANAGIGDHGTCCSEMDIWEANKVSTAFTPHPCTTIEQHMCEGDSCGGTYSDDRYGGTCDADGCDFNSYRMGNTTFYGEGKTVDTSSKFTVVTQFIKDSAGDLAEIKRFYVQNGKVIENSQSNVDGVSGNSITQSFCNAQKTAFGDIDDFNKKGGLKQMGKALAKPMVLVMSIWDDHAANMLWLDSTYPVEGGPGAYRGECPTTSGVPAEVEANAPNSKVIFSNIKFGPIGSTFSGGSSGTPPSNPSSSVKPVTSTAKPSSTSTASNPSGTGAAHWAQCGGIGFSGPTTCQSPYTCQKINDYYSQCV.

The first 17 residues, 1–17, serve as a signal peptide directing secretion; that stretch reads MLAKFAALAALVASANA. Residues 18–450 form a catalytic region; that stretch reads QAVCSLTAET…FGPIGSTFSG (433 aa). Residue Asn32 is glycosylated (N-linked (GlcNAc...) asparagine). The Nucleophile role is filled by Glu229. The Proton donor role is filled by Glu234. Asn287 carries N-linked (GlcNAc...) asparagine glycosylation. Positions 447 to 486 are disordered; it reads TFSGGSSGTPPSNPSSSVKPVTSTAKPSSTSTASNPSGTG. The interval 451 to 485 is linker; it reads GSSGTPPSNPSSSVKPVTSTAKPSSTSTASNPSGT. The 37-residue stretch at 485–521 folds into the CBM1 domain; that stretch reads TGAAHWAQCGGIGFSGPTTCQSPYTCQKINDYYSQCV. Cystine bridges form between Cys493–Cys510 and Cys504–Cys520.

Belongs to the glycosyl hydrolase 7 (cellulase C) family.

Its subcellular location is the secreted. It carries out the reaction Hydrolysis of (1-&gt;4)-beta-D-glucosidic linkages in cellulose and cellotetraose, releasing cellobiose from the non-reducing ends of the chains.. This is Exoglucanase 1 (cbh-1) from Neurospora crassa (strain ATCC 24698 / 74-OR23-1A / CBS 708.71 / DSM 1257 / FGSC 987).